Here is a 380-residue protein sequence, read N- to C-terminus: Guanine nucleotide-binding protein subunit beta (380 aa).

WD repeat units lie at residues 64–94 (GHSG…IVWN), 106–136 (LHCP…SIFN), 155–186 (GHKG…VLWD), 203–234 (GHTA…RLWD), 247–277 (GHEG…RLFD), 296–326 (NELP…YVWD), and 342–372 (SHEG…KIWA).

The protein belongs to the WD repeat G protein beta family. G proteins are composed of 3 units, alpha, beta and gamma. Interacts with the gamma subunits RGG1 and RGG2.

Its subcellular location is the cell membrane. Its function is as follows. Guanine nucleotide-binding proteins (G proteins) are involved as modulators or transducers in various transmembrane signaling systems. The beta and gamma chains are required for the GTPase activity, for replacement of GDP by GTP, and for G protein-effector interaction. This is Guanine nucleotide-binding protein subunit beta from Oryza sativa subsp. japonica (Rice).